The chain runs to 577 residues: Proline--tRNA ligase (577 aa).

Belongs to the class-II aminoacyl-tRNA synthetase family. ProS type 1 subfamily. As to quaternary structure, homodimer.

It is found in the cytoplasm. It carries out the reaction tRNA(Pro) + L-proline + ATP = L-prolyl-tRNA(Pro) + AMP + diphosphate. Functionally, catalyzes the attachment of proline to tRNA(Pro) in a two-step reaction: proline is first activated by ATP to form Pro-AMP and then transferred to the acceptor end of tRNA(Pro). As ProRS can inadvertently accommodate and process non-cognate amino acids such as alanine and cysteine, to avoid such errors it has two additional distinct editing activities against alanine. One activity is designated as 'pretransfer' editing and involves the tRNA(Pro)-independent hydrolysis of activated Ala-AMP. The other activity is designated 'posttransfer' editing and involves deacylation of mischarged Ala-tRNA(Pro). The misacylated Cys-tRNA(Pro) is not edited by ProRS. This chain is Proline--tRNA ligase, found in Helicobacter pylori (strain ATCC 700392 / 26695) (Campylobacter pylori).